The primary structure comprises 159 residues: tRNA-specific adenosine deaminase (159 aa).

One can recognise a CMP/dCMP-type deaminase domain in the interval 6–133; sequence EEQTYFMQEA…ERLNHRVQVE (128 aa). Histidine 57 is a binding site for Zn(2+). Glutamate 59 (proton donor) is an active-site residue. Zn(2+) contacts are provided by cysteine 87 and cysteine 90.

It belongs to the cytidine and deoxycytidylate deaminase family. Homodimer. The cofactor is Zn(2+).

It catalyses the reaction adenosine(34) in tRNA + H2O + H(+) = inosine(34) in tRNA + NH4(+). Its function is as follows. Catalyzes the deamination of adenosine to inosine at the wobble position 34 of tRNA(Arg2). This chain is tRNA-specific adenosine deaminase, found in Streptococcus pyogenes serotype M18 (strain MGAS8232).